The primary structure comprises 381 residues: Outer membrane protein assembly factor BamB (381 aa).

Positions 1–22 are cleaved as a signal peptide; it reads MNLLKRYAAPVACAAAVLVFAA. Cysteine 23 is lipidated: N-palmitoyl cysteine. Cysteine 23 is lipidated: S-diacylglycerol cysteine.

The protein belongs to the BamB family. Part of the Bam complex.

It localises to the cell outer membrane. Functionally, part of the outer membrane protein assembly complex, which is involved in assembly and insertion of beta-barrel proteins into the outer membrane. The polypeptide is Outer membrane protein assembly factor BamB (Burkholderia pseudomallei (strain K96243)).